Here is a 310-residue protein sequence, read N- to C-terminus: N-acetyl-gamma-glutamyl-phosphate reductase (310 aa).

The active site involves Cys-117.

Belongs to the NAGSA dehydrogenase family. Type 2 subfamily.

Its subcellular location is the cytoplasm. It carries out the reaction N-acetyl-L-glutamate 5-semialdehyde + phosphate + NADP(+) = N-acetyl-L-glutamyl 5-phosphate + NADPH + H(+). Its pathway is amino-acid biosynthesis; L-arginine biosynthesis; N(2)-acetyl-L-ornithine from L-glutamate: step 3/4. Functionally, catalyzes the NADPH-dependent reduction of N-acetyl-5-glutamyl phosphate to yield N-acetyl-L-glutamate 5-semialdehyde. The chain is N-acetyl-gamma-glutamyl-phosphate reductase from Sinorhizobium medicae (strain WSM419) (Ensifer medicae).